The primary structure comprises 391 residues: 4-hydroxy-3-methylbut-2-en-1-yl diphosphate synthase (flavodoxin) (391 aa).

Residues cysteine 281, cysteine 284, cysteine 316, and glutamate 323 each coordinate [4Fe-4S] cluster. Positions 372 to 391 (EMGGEDGQGGIKGSPVVSVS) are disordered.

The protein belongs to the IspG family. The cofactor is [4Fe-4S] cluster.

The catalysed reaction is (2E)-4-hydroxy-3-methylbut-2-enyl diphosphate + oxidized [flavodoxin] + H2O + 2 H(+) = 2-C-methyl-D-erythritol 2,4-cyclic diphosphate + reduced [flavodoxin]. It participates in isoprenoid biosynthesis; isopentenyl diphosphate biosynthesis via DXP pathway; isopentenyl diphosphate from 1-deoxy-D-xylulose 5-phosphate: step 5/6. Its function is as follows. Converts 2C-methyl-D-erythritol 2,4-cyclodiphosphate (ME-2,4cPP) into 1-hydroxy-2-methyl-2-(E)-butenyl 4-diphosphate. The protein is 4-hydroxy-3-methylbut-2-en-1-yl diphosphate synthase (flavodoxin) of Renibacterium salmoninarum (strain ATCC 33209 / DSM 20767 / JCM 11484 / NBRC 15589 / NCIMB 2235).